Consider the following 708-residue polypeptide: Ion-translocating oxidoreductase complex subunit C (708 aa).

4Fe-4S ferredoxin-type domains lie at 369 to 397 (GEPQEEQSCIRCSACADACPADLLPQQLY) and 407 to 436 (KATTHNIADCIECGACAWVCPSNIPLVQYF). Residues Cys-377, Cys-380, Cys-383, Cys-387, Cys-416, Cys-419, Cys-422, and Cys-426 each coordinate [4Fe-4S] cluster. The interval 630–682 (AKARKLEQQQANAEPEEQIDPRKAAVEAAIARAKARKLEQQQANAEPEEQIDP) is disordered.

This sequence belongs to the 4Fe4S bacterial-type ferredoxin family. RnfC subfamily. In terms of assembly, the complex is composed of six subunits: RsxA, RsxB, RsxC, RsxD, RsxE and RsxG. Requires [4Fe-4S] cluster as cofactor.

The protein resides in the cell inner membrane. Its function is as follows. Part of a membrane-bound complex that couples electron transfer with translocation of ions across the membrane. Required to maintain the reduced state of SoxR. This is Ion-translocating oxidoreductase complex subunit C from Escherichia coli O1:K1 / APEC.